The chain runs to 428 residues: Serine--tRNA ligase (428 aa).

235–237 contacts L-serine; it reads TAE. 266-268 contributes to the ATP binding site; it reads RSE. Glu289 lines the L-serine pocket. Residue 353-356 participates in ATP binding; that stretch reads EISS. Residue Ser389 participates in L-serine binding.

The protein belongs to the class-II aminoacyl-tRNA synthetase family. Type-1 seryl-tRNA synthetase subfamily. As to quaternary structure, homodimer. The tRNA molecule binds across the dimer.

The protein resides in the cytoplasm. The catalysed reaction is tRNA(Ser) + L-serine + ATP = L-seryl-tRNA(Ser) + AMP + diphosphate + H(+). The enzyme catalyses tRNA(Sec) + L-serine + ATP = L-seryl-tRNA(Sec) + AMP + diphosphate + H(+). The protein operates within aminoacyl-tRNA biosynthesis; selenocysteinyl-tRNA(Sec) biosynthesis; L-seryl-tRNA(Sec) from L-serine and tRNA(Sec): step 1/1. Functionally, catalyzes the attachment of serine to tRNA(Ser). Is also able to aminoacylate tRNA(Sec) with serine, to form the misacylated tRNA L-seryl-tRNA(Sec), which will be further converted into selenocysteinyl-tRNA(Sec). The sequence is that of Serine--tRNA ligase from Shewanella loihica (strain ATCC BAA-1088 / PV-4).